Here is a 397-residue protein sequence, read N- to C-terminus: Acetate kinase (397 aa).

Residue asparagine 9 participates in Mg(2+) binding. Lysine 16 contacts ATP. Arginine 87 lines the substrate pocket. Catalysis depends on aspartate 144, which acts as the Proton donor/acceptor. Residues 204–208 (HLGNG), 279–281 (DCR), and 327–331 (GIGEN) each bind ATP. Glutamate 381 is a Mg(2+) binding site.

Belongs to the acetokinase family. In terms of assembly, homodimer. It depends on Mg(2+) as a cofactor. Requires Mn(2+) as cofactor.

Its subcellular location is the cytoplasm. The enzyme catalyses acetate + ATP = acetyl phosphate + ADP. Its pathway is metabolic intermediate biosynthesis; acetyl-CoA biosynthesis; acetyl-CoA from acetate: step 1/2. In terms of biological role, catalyzes the formation of acetyl phosphate from acetate and ATP. Can also catalyze the reverse reaction. This chain is Acetate kinase, found in Chromobacterium violaceum (strain ATCC 12472 / DSM 30191 / JCM 1249 / CCUG 213 / NBRC 12614 / NCIMB 9131 / NCTC 9757 / MK).